The following is a 635-amino-acid chain: Threonine--tRNA ligase (635 aa).

A TGS domain is found at 1 to 61; sequence MISIRLKDGS…KEDGCLELLD (61 aa). The tract at residues 242 to 532 is catalytic; the sequence is DHRRLGRELG…LTEHFGGAFP (291 aa). Zn(2+)-binding residues include cysteine 333, histidine 384, and histidine 509.

It belongs to the class-II aminoacyl-tRNA synthetase family. In terms of assembly, homodimer. Requires Zn(2+) as cofactor.

The protein resides in the cytoplasm. It carries out the reaction tRNA(Thr) + L-threonine + ATP = L-threonyl-tRNA(Thr) + AMP + diphosphate + H(+). Its function is as follows. Catalyzes the attachment of threonine to tRNA(Thr) in a two-step reaction: L-threonine is first activated by ATP to form Thr-AMP and then transferred to the acceptor end of tRNA(Thr). Also edits incorrectly charged L-seryl-tRNA(Thr). This Syntrophomonas wolfei subsp. wolfei (strain DSM 2245B / Goettingen) protein is Threonine--tRNA ligase.